Here is a 442-residue protein sequence, read N- to C-terminus: Shufflon protein B (442 aa).

A constant region region spans residues 1-361 (MKKYDRGWAS…TGAILSCQSG (361 aa)). Positions 362-442 (TWKSSSASIW…SYFMKITCLK (81 aa)) are variable region.

This chain is Shufflon protein B, found in Escherichia coli.